A 609-amino-acid chain; its full sequence is Membrane protein insertase YidC (609 aa).

5 consecutive transmembrane segments (helical) span residues 8-28 (LILATALSFLVILVWFILFPP), 381-401 (MGWSIIGLTLIIKAIVFPLAL), 451-471 (LPILLQIPIFFSLYKVIFVTI), 509-529 (SLTATILIGILPLLLGISMWL), and 545-565 (IFAWMPWVFMFMLGSFASGLV).

The protein belongs to the OXA1/ALB3/YidC family. Type 1 subfamily. In terms of assembly, interacts with the Sec translocase complex via SecD. Specifically interacts with transmembrane segments of nascent integral membrane proteins during membrane integration.

The protein localises to the cell inner membrane. Required for the insertion and/or proper folding and/or complex formation of integral membrane proteins into the membrane. Involved in integration of membrane proteins that insert both dependently and independently of the Sec translocase complex, as well as at least some lipoproteins. Aids folding of multispanning membrane proteins. The chain is Membrane protein insertase YidC from Ruegeria pomeroyi (strain ATCC 700808 / DSM 15171 / DSS-3) (Silicibacter pomeroyi).